The primary structure comprises 492 residues: Monocarboxylate transporter 3 (492 aa).

Over 1–14 (MGAGGPRRGAGPPD) the chain is Cytoplasmic. The chain crosses the membrane as a helical span at residues 15–35 (GGWGWVVLGACFVVTGFAYGF). Residues 36–58 (PKAVSVFFRELKRDFGAGYSDTA) lie on the Extracellular side of the membrane. Residues 59-79 (WVSSIMLAMLYGTGPLSSILV) form a helical membrane-spanning segment. At 80 to 85 (TRFGCR) the chain is on the cytoplasmic side. The chain crosses the membrane as a helical span at residues 86–106 (PVMLAGGLLASAGMILASFAS). Over 107 to 115 (RLVELYLTA) the chain is Extracellular. Residues 116 to 136 (GVLTGLGLALNFQPSLIMLGL) form a helical membrane-spanning segment. The Cytoplasmic segment spans residues 137–146 (YFERRRPLAN). A helical transmembrane segment spans residues 147-167 (GLAAAGSPVFLSMLSPLGQLL). The Extracellular portion of the chain corresponds to 168–172 (GERFG). The chain crosses the membrane as a helical span at residues 173–193 (WRGGFLLFGGLLLHCCACGAV). Residues 194–228 (MRPPPGPPPRRDPSPHGGPARRRRLLDVAVCTDRA) lie on the Cytoplasmic side of the membrane. The chain crosses the membrane as a helical span at residues 229–249 (FVVYVVTKFLMALGLFVPAIL). Residues 250–257 (LVNYAKDA) are Extracellular-facing. The chain crosses the membrane as a helical span at residues 258–278 (GVPDAEAAFLLSIVGFVDIVA). The Cytoplasmic segment spans residues 279-293 (RPACGALAGLGRLRP). The chain crosses the membrane as a helical span at residues 294-314 (HVPYLFSLALLANGLTDLISA). Over 315-318 (RARS) the chain is Extracellular. The chain crosses the membrane as a helical span at residues 319–339 (YGTLVAFCIAFGLSYGMVGAL). The Cytoplasmic portion of the chain corresponds to 340-352 (QFEVLMATVGAPR). A helical membrane pass occupies residues 353-373 (FPSALGLVLLVEAVAVLIGPP). Over 374 to 386 (SAGRLVDALKNYE) the chain is Extracellular. The chain crosses the membrane as a helical span at residues 387–407 (IIFYLAGSEVALAGVFMAVTT). Over 408-492 (YCCLRCSKNI…GGHEARGQKA (85 aa)) the chain is Cytoplasmic. A disordered region spans residues 419–492 (SGRSAEGGAS…GGHEARGQKA (74 aa)). Basolateral sorting signal regions lie at residues 426-460 (GASD…VLSP) and 461-482 (RAGS…HESI). Positions 476-492 (ELDHESIGGHEARGQKA) are enriched in basic and acidic residues.

This sequence belongs to the major facilitator superfamily. Monocarboxylate porter (TC 2.A.1.13) family. As to expression, expressed exclusively in retinal pigment epithelium and choroid plexus epithelium.

The protein resides in the basolateral cell membrane. The catalysed reaction is (S)-lactate(in) + H(+)(in) = (S)-lactate(out) + H(+)(out). In terms of biological role, probable retinal pigment epithelium (RPE)-specific proton-coupled L-lactate transporter. May facilitate transport of lactate and H(+) out of the retina and could therefore play an essential role in maintenance of metabolic and ionic homeostasis of the outer retina. The chain is Monocarboxylate transporter 3 (Slc16a8) from Mus musculus (Mouse).